We begin with the raw amino-acid sequence, 333 residues long: Probable tRNA pseudouridine synthase B (333 aa).

The active-site Nucleophile is the aspartate 66. A PUA domain is found at 233-308 (LKKIIIKDSA…EVVEITRVIM (76 aa)).

Belongs to the pseudouridine synthase TruB family. Type 2 subfamily.

The catalysed reaction is uridine(55) in tRNA = pseudouridine(55) in tRNA. Its function is as follows. Could be responsible for synthesis of pseudouridine from uracil-55 in the psi GC loop of transfer RNAs. This is Probable tRNA pseudouridine synthase B from Methanococcus maripaludis (strain DSM 14266 / JCM 13030 / NBRC 101832 / S2 / LL).